A 610-amino-acid chain; its full sequence is Glutamine--fructose-6-phosphate aminotransferase [isomerizing] (610 aa).

The active-site Nucleophile; for GATase activity is cysteine 2. Positions 2–218 (CGIVGAVAQR…EGDIAEITRR (217 aa)) constitute a Glutamine amidotransferase type-2 domain. 2 SIS domains span residues 278-426 (IVDS…VKGH) and 459-600 (LAED…VDQP). Lysine 605 functions as the For Fru-6P isomerization activity in the catalytic mechanism.

In terms of assembly, homodimer.

It is found in the cytoplasm. The catalysed reaction is D-fructose 6-phosphate + L-glutamine = D-glucosamine 6-phosphate + L-glutamate. Functionally, catalyzes the first step in hexosamine metabolism, converting fructose-6P into glucosamine-6P using glutamine as a nitrogen source. In Haemophilus influenzae (strain ATCC 51907 / DSM 11121 / KW20 / Rd), this protein is Glutamine--fructose-6-phosphate aminotransferase [isomerizing].